We begin with the raw amino-acid sequence, 275 residues long: NH(3)-dependent NAD(+) synthetase (275 aa).

46–53 provides a ligand contact to ATP; the sequence is GISGGQDS. Asp52 is a binding site for Mg(2+). Residue Arg140 coordinates deamido-NAD(+). Thr160 lines the ATP pocket. Glu165 provides a ligand contact to Mg(2+). Residues Lys173 and Asp180 each contribute to the deamido-NAD(+) site. Positions 189 and 211 each coordinate ATP. Position 260-261 (260-261) interacts with deamido-NAD(+); it reads HK.

It belongs to the NAD synthetase family. In terms of assembly, homodimer.

The enzyme catalyses deamido-NAD(+) + NH4(+) + ATP = AMP + diphosphate + NAD(+) + H(+). It functions in the pathway cofactor biosynthesis; NAD(+) biosynthesis; NAD(+) from deamido-NAD(+) (ammonia route): step 1/1. Functionally, catalyzes the ATP-dependent amidation of deamido-NAD to form NAD. Uses ammonia as a nitrogen source. This is NH(3)-dependent NAD(+) synthetase from Salmonella heidelberg (strain SL476).